Reading from the N-terminus, the 149-residue chain is D-aminoacyl-tRNA deacylase (149 aa).

Residues glycine 137–proline 138 carry the Gly-cisPro motif, important for rejection of L-amino acids motif.

It belongs to the DTD family. In terms of assembly, homodimer.

The protein resides in the cytoplasm. The enzyme catalyses glycyl-tRNA(Ala) + H2O = tRNA(Ala) + glycine + H(+). The catalysed reaction is a D-aminoacyl-tRNA + H2O = a tRNA + a D-alpha-amino acid + H(+). An aminoacyl-tRNA editing enzyme that deacylates mischarged D-aminoacyl-tRNAs. Also deacylates mischarged glycyl-tRNA(Ala), protecting cells against glycine mischarging by AlaRS. Acts via tRNA-based rather than protein-based catalysis; rejects L-amino acids rather than detecting D-amino acids in the active site. By recycling D-aminoacyl-tRNA to D-amino acids and free tRNA molecules, this enzyme counteracts the toxicity associated with the formation of D-aminoacyl-tRNA entities in vivo and helps enforce protein L-homochirality. This Janthinobacterium sp. (strain Marseille) (Minibacterium massiliensis) protein is D-aminoacyl-tRNA deacylase.